The chain runs to 179 residues: Peptidyl-tRNA hydrolase 2, mitochondrial (179 aa).

The helical transmembrane segment at 10-32 threads the bilayer; the sequence is YLTNPGALSLAAGVACGVCLGWG. Residues Lys76, Lys81, Lys95, Lys106, Lys115, Lys171, and Lys177 each participate in a glycyl lysine isopeptide (Lys-Gly) (interchain with G-Cter in ubiquitin) cross-link.

It belongs to the PTH2 family. As to quaternary structure, monomer. Ubiquitinated by PRKN during mitophagy, leading to its degradation and enhancement of mitophagy. Deubiquitinated by USP30.

Its subcellular location is the mitochondrion outer membrane. The enzyme catalyses an N-acyl-L-alpha-aminoacyl-tRNA + H2O = an N-acyl-L-amino acid + a tRNA + H(+). In terms of biological role, peptidyl-tRNA hydrolase which releases tRNAs from the ribosome during protein synthesis. Promotes caspase-independent apoptosis by regulating the function of two transcriptional regulators, AES and TLE1. The sequence is that of Peptidyl-tRNA hydrolase 2, mitochondrial (PTRH2) from Bos taurus (Bovine).